The following is a 99-amino-acid chain: Small ribosomal subunit protein bS20 (99 aa).

This sequence belongs to the bacterial ribosomal protein bS20 family.

Its function is as follows. Binds directly to 16S ribosomal RNA. The sequence is that of Small ribosomal subunit protein bS20 from Caldicellulosiruptor saccharolyticus (strain ATCC 43494 / DSM 8903 / Tp8T 6331).